We begin with the raw amino-acid sequence, 158 residues long: Putative pre-16S rRNA nuclease (158 aa).

This sequence belongs to the YqgF nuclease family.

The protein localises to the cytoplasm. In terms of biological role, could be a nuclease involved in processing of the 5'-end of pre-16S rRNA. The sequence is that of Putative pre-16S rRNA nuclease from Paracoccus denitrificans (strain Pd 1222).